The following is a 123-amino-acid chain: uncharacterized protein (123 aa).

The region spanning 17–117 (SNDNAFLVDV…NNQDKGWKQN (101 aa)) is the Rhodanese domain.

This is an uncharacterized protein from Rickettsia conorii (strain ATCC VR-613 / Malish 7).